Reading from the N-terminus, the 255-residue chain is Pyrroloquinoline-quinone synthase (255 aa).

The protein belongs to the PqqC family.

The enzyme catalyses 6-(2-amino-2-carboxyethyl)-7,8-dioxo-1,2,3,4,7,8-hexahydroquinoline-2,4-dicarboxylate + 3 O2 = pyrroloquinoline quinone + 2 H2O2 + 2 H2O + H(+). The protein operates within cofactor biosynthesis; pyrroloquinoline quinone biosynthesis. Functionally, ring cyclization and eight-electron oxidation of 3a-(2-amino-2-carboxyethyl)-4,5-dioxo-4,5,6,7,8,9-hexahydroquinoline-7,9-dicarboxylic-acid to PQQ. This Cereibacter sphaeroides (strain ATCC 17023 / DSM 158 / JCM 6121 / CCUG 31486 / LMG 2827 / NBRC 12203 / NCIMB 8253 / ATH 2.4.1.) (Rhodobacter sphaeroides) protein is Pyrroloquinoline-quinone synthase.